Consider the following 202-residue polypeptide: Protein GrpE 1 (202 aa).

The protein belongs to the GrpE family. In terms of assembly, homodimer.

The protein localises to the cytoplasm. In terms of biological role, participates actively in the response to hyperosmotic and heat shock by preventing the aggregation of stress-denatured proteins, in association with DnaK and GrpE. It is the nucleotide exchange factor for DnaK and may function as a thermosensor. Unfolded proteins bind initially to DnaJ; upon interaction with the DnaJ-bound protein, DnaK hydrolyzes its bound ATP, resulting in the formation of a stable complex. GrpE releases ADP from DnaK; ATP binding to DnaK triggers the release of the substrate protein, thus completing the reaction cycle. Several rounds of ATP-dependent interactions between DnaJ, DnaK and GrpE are required for fully efficient folding. The chain is Protein GrpE 1 from Buchnera aphidicola subsp. Schizaphis graminum (strain Sg).